Here is a 109-residue protein sequence, read N- to C-terminus: Small ribosomal subunit protein bS6 (109 aa).

This sequence belongs to the bacterial ribosomal protein bS6 family.

Functionally, binds together with bS18 to 16S ribosomal RNA. The polypeptide is Small ribosomal subunit protein bS6 (Dehalococcoides mccartyi (strain ATCC BAA-2266 / KCTC 15142 / 195) (Dehalococcoides ethenogenes (strain 195))).